Here is a 24-residue protein sequence, read N- to C-terminus: Ascaphin-2 (24 aa).

Expressed by the skin glands.

The protein localises to the secreted. Functionally, antimicrobial peptide that shows higher potency against Gram-negative bacteria than against Gram-positive bacteria. Has a very week hemolytic activity. The polypeptide is Ascaphin-2 (Ascaphus truei (Coastal tailed frog)).